The primary structure comprises 39 residues: Photosystem II reaction center protein L (39 aa).

The helical transmembrane segment at 18–38 (SLYLGLLFVFVTGVLMSSYFF) threads the bilayer.

This sequence belongs to the PsbL family. As to quaternary structure, PSII is composed of 1 copy each of membrane proteins PsbA, PsbB, PsbC, PsbD, PsbE, PsbF, PsbH, PsbI, PsbJ, PsbK, PsbL, PsbM, PsbT, PsbX, PsbY, PsbZ, Psb30/Ycf12, peripheral proteins PsbO, CyanoQ (PsbQ), PsbU, PsbV and a large number of cofactors. It forms dimeric complexes.

The protein localises to the cellular thylakoid membrane. One of the components of the core complex of photosystem II (PSII). PSII is a light-driven water:plastoquinone oxidoreductase that uses light energy to abstract electrons from H(2)O, generating O(2) and a proton gradient subsequently used for ATP formation. It consists of a core antenna complex that captures photons, and an electron transfer chain that converts photonic excitation into a charge separation. This subunit is found at the monomer-monomer interface and is required for correct PSII assembly and/or dimerization. The sequence is that of Photosystem II reaction center protein L from Synechococcus sp. (strain CC9902).